Here is a 287-residue protein sequence, read N- to C-terminus: 4-hydroxybenzoate octaprenyltransferase (287 aa).

A run of 6 helical transmembrane segments spans residues 41-61 (LPLLVIFTVGTVLMRSAGCAI), 92-112 (VALAAALSLLAFLLILPLNAL), 133-153 (FFAIPQAYLGIAFGFGIPMAF), 160-180 (VPMLAWVMLLANVFWSVAYDT), 218-238 (LGIYVGIGVLLGFGALYWLGW), and 267-287 (NNWLGGALFAGIAAHYAATWF).

Belongs to the UbiA prenyltransferase family. The cofactor is Mg(2+).

It is found in the cell inner membrane. The catalysed reaction is all-trans-octaprenyl diphosphate + 4-hydroxybenzoate = 4-hydroxy-3-(all-trans-octaprenyl)benzoate + diphosphate. It functions in the pathway cofactor biosynthesis; ubiquinone biosynthesis. Catalyzes the prenylation of para-hydroxybenzoate (PHB) with an all-trans polyprenyl group. Mediates the second step in the final reaction sequence of ubiquinone-8 (UQ-8) biosynthesis, which is the condensation of the polyisoprenoid side chain with PHB, generating the first membrane-bound Q intermediate 3-octaprenyl-4-hydroxybenzoate. The polypeptide is 4-hydroxybenzoate octaprenyltransferase (Paraburkholderia xenovorans (strain LB400)).